A 283-amino-acid polypeptide reads, in one-letter code: MRHIAVVYKRMRPEAARLAQDIKSWLAKRNVLVFCMENIDSAGVLSSHQRVDFPQDTDLVIVLGGDGTLLSVARLIESRKIPVIGVNLGGMGFLTGITIDNCYMELERILGGDYEIEERMRLRVLVRREHREIFSHRVLNDAVINKGALARIIDLVTVIDGRFLTHYRGDGLIFSTPTGSTAYNLAAGGPIVFPTAQAIIITPICSFTLTNRPIIFPSHVIIRIELGEPIKDVTLTCDGQVGCLLAPSDRIVITAAANPLRLIKTPTVDHFEILRNKLKWGQA.

Catalysis depends on aspartate 66, which acts as the Proton acceptor. NAD(+) is bound by residues 66–67, 140–141, arginine 151, arginine 168, aspartate 170, and glutamine 240; these read DG and ND.

This sequence belongs to the NAD kinase family. A divalent metal cation is required as a cofactor.

It localises to the cytoplasm. The enzyme catalyses NAD(+) + ATP = ADP + NADP(+) + H(+). Its function is as follows. Involved in the regulation of the intracellular balance of NAD and NADP, and is a key enzyme in the biosynthesis of NADP. Catalyzes specifically the phosphorylation on 2'-hydroxyl of the adenosine moiety of NAD to yield NADP. In Syntrophobacter fumaroxidans (strain DSM 10017 / MPOB), this protein is NAD kinase.